Reading from the N-terminus, the 218-residue chain is Thiopurine S-methyltransferase (218 aa).

S-adenosyl-L-methionine-binding residues include Trp10, Leu45, Glu66, and Arg123.

Belongs to the class I-like SAM-binding methyltransferase superfamily. TPMT family.

It localises to the cytoplasm. It carries out the reaction S-adenosyl-L-methionine + a thiopurine = S-adenosyl-L-homocysteine + a thiopurine S-methylether.. In Pseudomonas paraeruginosa (strain DSM 24068 / PA7) (Pseudomonas aeruginosa (strain PA7)), this protein is Thiopurine S-methyltransferase.